The following is a 130-amino-acid chain: T-cell receptor alpha chain V region PHDS58 (130 aa).

The signal sequence occupies residues 1-20 (MLLALLPVLGIHFVLRDAQA). Positions 21–114 (QSVTQPDARV…SAVYFCAVSG (94 aa)) are v segment. Asparagine 90 carries N-linked (GlcNAc...) asparagine glycosylation. Positions 115–130 (FASALTFGSGTKVIVL) are j segment.

This Mus musculus (Mouse) protein is T-cell receptor alpha chain V region PHDS58.